The following is a 231-amino-acid chain: Uracil-DNA glycosylase (231 aa).

The Proton acceptor role is filled by D71.

The protein belongs to the uracil-DNA glycosylase (UDG) superfamily. UNG family.

Its subcellular location is the cytoplasm. It carries out the reaction Hydrolyzes single-stranded DNA or mismatched double-stranded DNA and polynucleotides, releasing free uracil.. Functionally, excises uracil residues from the DNA which can arise as a result of misincorporation of dUMP residues by DNA polymerase or due to deamination of cytosine. The sequence is that of Uracil-DNA glycosylase from Pseudomonas aeruginosa (strain UCBPP-PA14).